Here is an 88-residue protein sequence, read N- to C-terminus: EMBRYO SURROUNDING FACTOR 1-like protein 3 (88 aa).

Positions 1–22 (MKLSQIALICIVIASLFAMHEC) are cleaved as a signal peptide. 3 cysteine pairs are disulfide-bonded: C41-C56, C54-C80, and C57-C67.

It belongs to the MEG family. As to expression, expressed in stems, leaves and flowers.

The polypeptide is EMBRYO SURROUNDING FACTOR 1-like protein 3 (ESFL3) (Arabidopsis thaliana (Mouse-ear cress)).